Here is a 471-residue protein sequence, read N- to C-terminus: 3-isopropylmalate dehydratase large subunit (471 aa).

Residues cysteine 347, cysteine 409, and cysteine 412 each contribute to the [4Fe-4S] cluster site.

This sequence belongs to the aconitase/IPM isomerase family. LeuC type 1 subfamily. As to quaternary structure, heterodimer of LeuC and LeuD. The cofactor is [4Fe-4S] cluster.

It catalyses the reaction (2R,3S)-3-isopropylmalate = (2S)-2-isopropylmalate. Its pathway is amino-acid biosynthesis; L-leucine biosynthesis; L-leucine from 3-methyl-2-oxobutanoate: step 2/4. Catalyzes the isomerization between 2-isopropylmalate and 3-isopropylmalate, via the formation of 2-isopropylmaleate. This chain is 3-isopropylmalate dehydratase large subunit, found in Buchnera aphidicola subsp. Rhopalosiphum padi.